Consider the following 256-residue polypeptide: Follistatin-related protein 3 (256 aa).

An N-terminal signal peptide occupies residues 1–23; the sequence is MRPGALWPLLWGALVWAVGSVGA. Residues 34–105 enclose the TB domain; that stretch reads GVCWLQQGKE…SCDGVECGPG (72 aa). 8 disulfide bridges follow: C36–C59, C46–C90, C60–C93, C97–C108, C102–C117, C119–C151, C123–C144, and C133–C165. A glycan (N-linked (GlcNAc...) asparagine) is linked at N71. Positions 97 to 117 constitute a Follistatin-like 1 domain; the sequence is CDGVECGPGKACRMLGGRPHC. 2 Kazal-like domains span residues 111-167 and 187-243; these read LGGR…RCQK and SAHC…ICTG. In terms of domain architecture, Follistatin-like 2 spans 168–191; that stretch reads SCAQVVCPRPQSCLVDQTGSAHCV. Intrachain disulfides connect C193–C227, C198–C220, and C209–C241. N-linked (GlcNAc...) asparagine glycosylation occurs at N213.

Interacts with INHBA and INHBB. Interacts with FN1. Interacts with ADAM12. Interacts with MLLT10; the interaction enhances MLLT10 in vitro transcriptional activity and self-association. Interacts with MSTN.

Its subcellular location is the secreted. It localises to the nucleus. In terms of biological role, the secreted form is a binding and antagonizing protein for members of the TGF-beta family, such as activin, BMP2 and MSTN. Inhibits activin A-, activin B-, BMP2- and MSDT-induced cellular signaling; more effective on activin A than on activin B. Involved in bone formation; inhibits osteoclast differentiation. Involved in hematopoiesis; involved in differentiation of hemopoietic progenitor cells, increases hematopoietic cell adhesion to fibronectin and seems to contribute to the adhesion of hematopoietic precursor cells to the bone marrow stroma. The nuclear form is probably involved in transcriptional regulation via interaction with MLLT10. This chain is Follistatin-related protein 3 (Fstl3), found in Rattus norvegicus (Rat).